We begin with the raw amino-acid sequence, 76 residues long: Lividin-2 (76 aa).

The signal sequence occupies residues 1 to 22 (MFTLKKSLLLLFFLGTISLSLC). Positions 23 to 41 (QEERNADEEDGGEVTEEEV) are excised as a propeptide. A disulfide bridge links Cys70 with Cys76.

Expressed by the skin glands.

The protein resides in the secreted. Antimicrobial peptide. In Odorrana livida (Green mountain frog), this protein is Lividin-2.